The primary structure comprises 579 residues: Small conductance calcium-activated potassium channel protein 2 (579 aa).

2 disordered regions span residues methionine 1–alanine 54 and threonine 90–glutamine 115. A compositionally biased stretch (gly residues) spans threonine 90–serine 103. The helical transmembrane segment at alanine 138–glycine 158 threads the bilayer. Tyrosine 160 is modified (phosphotyrosine). A helical membrane pass occupies residues leucine 168–tyrosine 188. Residues isoleucine 214 to threonine 234 form a helical membrane-spanning segment. The helical transmembrane segment at isoleucine 256–histidine 276 threads the bilayer. Residues leucine 305–alanine 325 form a helical membrane-spanning segment. Positions phenylalanine 345 to valine 365 form an intramembrane region, pore-forming. A helical transmembrane segment spans residues valine 374–alanine 394. The interval aspartate 412–isoleucine 488 is calmodulin-binding. A disordered region spans residues valine 551–serine 579. The span at serine 568–serine 579 shows a compositional bias: low complexity.

Belongs to the potassium channel KCNN family. KCa2.2/KCNN2 subfamily. Homodimer. Heteromultimer with KCNN1 and KCNN3. The complex is composed of 4 channel subunits each of which binds to a calmodulin subunit which regulates the channel activity through calcium-binding. Interacts (via N-terminal domain) with MPP2. As to expression, expressed in atrial myocytes (at protein level). Widely expressed.

Its subcellular location is the membrane. The protein localises to the cytoplasm. It is found in the myofibril. It localises to the sarcomere. The protein resides in the z line. The enzyme catalyses K(+)(in) = K(+)(out). With respect to regulation, inhibited by bee venom neurotoxin apamin. Inhibited by UCL 1684 and tetraethylammonium (TEA). Its function is as follows. Small conductance calcium-activated potassium channel that mediates the voltage-independent transmembrane transfer of potassium across the cell membrane through a constitutive interaction with calmodulin which binds the intracellular calcium allowing its opening. The current is characterized by a voltage-independent activation, an intracellular calcium concentration increase-dependent activation and a single-channel conductance of about 3 picosiemens. Also presents an inwardly rectifying current, thus reducing its already small outward conductance of potassium ions, which is particularly the case when the membrane potential displays positive values, above + 20 mV. The inward rectification could be due to a blockade of the outward current by intracellular divalent cations such as calcium and magnesium and could also be due to an intrinsic property of the channel pore, independent of intracellular divalent ions. There are three positively charged amino acids in the S6 transmembrane domain, close to the pore, that collectively control the conductance and rectification through an electrostatic mechanism. Additionally, electrostatic contributions from these residues also play an important role in determining the intrinsic open probability of the channel in the absence of calcium, affecting the apparent calcium affinity for activation. Forms an heteromeric complex with calmodulin, which is constitutively associated in a calcium-independent manner. Channel opening is triggered when calcium binds the calmodulin resulting in a rotary movement leading to the formation of the dimeric complex to open the gate. Plays a role in the repolarization phase of cardiac action potential. The protein is Small conductance calcium-activated potassium channel protein 2 of Homo sapiens (Human).